The primary structure comprises 635 residues: Extracellular metalloproteinase mep (635 aa).

The signal sequence occupies residues 1–19 (MMRGLLLAGALGLPLAVLA). A propeptide spanning residues 20–246 (HPTHHAHGLQ…VHGVVDYVAE (227 aa)) is cleaved from the precursor. The N-linked (GlcNAc...) asparagine glycan is linked to Asn287. Residues 290-309 (TTRGNNGIAQSNPTGGSQYL) are compositionally biased toward polar residues. The tract at residues 290 to 311 (TTRGNNGIAQSNPTGGSQYLKN) is disordered. Position 430 (His430) interacts with Zn(2+). The active site involves Glu431. His434 provides a ligand contact to Zn(2+).

Belongs to the peptidase M36 family. It depends on Zn(2+) as a cofactor.

The protein resides in the secreted. Secreted metalloproteinase that allows assimilation of proteinaceous substrates. The sequence is that of Extracellular metalloproteinase mep (mep) from Aspergillus flavus (strain ATCC 200026 / FGSC A1120 / IAM 13836 / NRRL 3357 / JCM 12722 / SRRC 167).